The following is a 122-amino-acid chain: Large ribosomal subunit protein uL14 (122 aa).

Belongs to the universal ribosomal protein uL14 family. Part of the 50S ribosomal subunit. Forms a cluster with proteins L3 and L19. In the 70S ribosome, L14 and L19 interact and together make contacts with the 16S rRNA in bridges B5 and B8.

Its function is as follows. Binds to 23S rRNA. Forms part of two intersubunit bridges in the 70S ribosome. This is Large ribosomal subunit protein uL14 from Syntrophotalea carbinolica (strain DSM 2380 / NBRC 103641 / GraBd1) (Pelobacter carbinolicus).